Consider the following 239-residue polypeptide: Small ribosomal subunit protein uS2 (239 aa).

Belongs to the universal ribosomal protein uS2 family.

In Francisella tularensis subsp. tularensis (strain WY96-3418), this protein is Small ribosomal subunit protein uS2.